The sequence spans 369 residues: UDP-N-acetylglucosamine--N-acetylmuramyl-(pentapeptide) pyrophosphoryl-undecaprenol N-acetylglucosamine transferase (369 aa).

Residues 10-12 (TAG), Asn124, Arg161, Ser195, and Gln295 contribute to the UDP-N-acetyl-alpha-D-glucosamine site.

This sequence belongs to the glycosyltransferase 28 family. MurG subfamily.

It localises to the cell membrane. The enzyme catalyses di-trans,octa-cis-undecaprenyl diphospho-N-acetyl-alpha-D-muramoyl-L-alanyl-D-glutamyl-meso-2,6-diaminopimeloyl-D-alanyl-D-alanine + UDP-N-acetyl-alpha-D-glucosamine = di-trans,octa-cis-undecaprenyl diphospho-[N-acetyl-alpha-D-glucosaminyl-(1-&gt;4)]-N-acetyl-alpha-D-muramoyl-L-alanyl-D-glutamyl-meso-2,6-diaminopimeloyl-D-alanyl-D-alanine + UDP + H(+). The protein operates within cell wall biogenesis; peptidoglycan biosynthesis. Functionally, cell wall formation. Catalyzes the transfer of a GlcNAc subunit on undecaprenyl-pyrophosphoryl-MurNAc-pentapeptide (lipid intermediate I) to form undecaprenyl-pyrophosphoryl-MurNAc-(pentapeptide)GlcNAc (lipid intermediate II). This is UDP-N-acetylglucosamine--N-acetylmuramyl-(pentapeptide) pyrophosphoryl-undecaprenol N-acetylglucosamine transferase from Acidothermus cellulolyticus (strain ATCC 43068 / DSM 8971 / 11B).